A 73-amino-acid polypeptide reads, in one-letter code: uncharacterized protein (73 aa).

The signal sequence occupies residues 1-28 (MKFLLSVIAGLLILALYLFWKVQPPVWI).

This is an uncharacterized protein from Bacillus subtilis (strain 168).